We begin with the raw amino-acid sequence, 474 residues long: Sestrin homolog (474 aa).

The protein belongs to the sestrin family.

The protein localises to the nucleus. Its subcellular location is the cytoplasm. Functionally, may function as a negative feedback regulator of TOR function. In Caenorhabditis elegans, this protein is Sestrin homolog.